Consider the following 499-residue polypeptide: Protein-tyrosine sulfotransferase (499 aa).

Residues 1–9 (MRLPYRNKK) are Cytoplasmic-facing. A helical; Signal-anchor for type II membrane protein membrane pass occupies residues 10-30 (VTLWVLFGIIVITMFLFKFTE). At 31 to 499 (LRPTCLFKVD…NIMEDPMADT (469 aa)) the chain is on the lumenal side. 80–84 (RSGTT) contacts 3'-phosphoadenylyl sulfate. C98 and C158 are oxidised to a cystine. E101 serves as the catalytic Proton donor/acceptor. The interaction with peptide substrate stretch occupies residues 103 to 107 (RVIPR). 3'-phosphoadenylyl sulfate contacts are provided by R185, S193, and R197. An intrachain disulfide couples C227 to C235. 3'-phosphoadenylyl sulfate is bound by residues Y240, 287 to 296 (SSDQVIKPVN), and K302. N346 and N380 each carry an N-linked (GlcNAc...) asparagine glycan. 2 disordered regions span residues 362–460 (KQVL…QKPK) and 476–499 (NNIN…MADT). 2 stretches are compositionally biased toward low complexity: residues 375–400 (TNTI…IIPE) and 408–434 (HVQQ…QQQQ). Over residues 443–460 (EREAEPDREQQLLHQKPK) the composition is skewed to basic and acidic residues. Low complexity predominate over residues 476-491 (NNINNNINNNNNNNNI).

This sequence belongs to the protein sulfotransferase family.

The protein localises to the golgi apparatus membrane. The enzyme catalyses L-tyrosyl-[protein] + 3'-phosphoadenylyl sulfate = O-sulfo-L-tyrosine-[protein] + adenosine 3',5'-bisphosphate + H(+). In terms of biological role, catalyzes the O-sulfation of tyrosine residues within acidic motifs of polypeptides. Has a role in protein secretion. In Drosophila melanogaster (Fruit fly), this protein is Protein-tyrosine sulfotransferase.